The chain runs to 124 residues: UPF0231 protein SO_3983 (124 aa).

This sequence belongs to the UPF0231 family.

The polypeptide is UPF0231 protein SO_3983 (Shewanella oneidensis (strain ATCC 700550 / JCM 31522 / CIP 106686 / LMG 19005 / NCIMB 14063 / MR-1)).